Reading from the N-terminus, the 204-residue chain is uncharacterized protein (204 aa).

6 helical membrane passes run 19–39, 42–62, 78–98, 116–136, 143–163, and 167–187; these read TANP…LLNL, AGLF…GGIA, GTVA…LLVI, PVAM…MFIA, GIQV…AGEI, and ALIT…AMYV.

The protein belongs to the acetate uptake transporter (AceTr) (TC 2.A.96) family.

It is found in the cell membrane. This is an uncharacterized protein from Methanothermobacter thermautotrophicus (strain ATCC 29096 / DSM 1053 / JCM 10044 / NBRC 100330 / Delta H) (Methanobacterium thermoautotrophicum).